We begin with the raw amino-acid sequence, 202 residues long: Large ribosomal subunit protein bL25 (202 aa).

Residues 180–202 (PKQEAFEEDAEPSPGEEPEGENQ) are disordered. A compositionally biased stretch (acidic residues) spans 185–202 (FEEDAEPSPGEEPEGENQ).

The protein belongs to the bacterial ribosomal protein bL25 family. CTC subfamily. In terms of assembly, part of the 50S ribosomal subunit; part of the 5S rRNA/L5/L18/L25 subcomplex. Contacts the 5S rRNA. Binds to the 5S rRNA independently of L5 and L18.

This is one of the proteins that binds to the 5S RNA in the ribosome where it forms part of the central protuberance. This is Large ribosomal subunit protein bL25 from Bacillus velezensis (strain DSM 23117 / BGSC 10A6 / LMG 26770 / FZB42) (Bacillus amyloliquefaciens subsp. plantarum).